Reading from the N-terminus, the 149-residue chain is uncharacterized protein (149 aa).

The segment at Met-1–His-103 is disordered. The segment covering Lys-7 to Glu-18 has biased composition (basic and acidic residues). Over residues Thr-26–Gly-41 the composition is skewed to low complexity. The segment covering Gly-61–Glu-72 has biased composition (polar residues).

Belongs to the adhesin P1 family.

This is an uncharacterized protein from Mycoplasma pneumoniae (strain ATCC 29342 / M129 / Subtype 1) (Mycoplasmoides pneumoniae).